Consider the following 236-residue polypeptide: MGTTLDVSRAELALVVMYLNKAEARDKLCRAIQYGSKFLSGGQPGTAQNVDKSTSLARKVFRLFKFVNDLHGLISPVPKGTPLPLVLLGKSKNALLSTFLFLDQIVWLGRSGIYKNKERAELLGRISLFCWMGSSVCTTLVEVGEMGRLSSSMKKIEKGLKNGNKYQDEDYRAKLKKSNERSLALIKSAMDIVVAAGLLQLAPTKITPRVTGAFGFITSIISCYQLLPTRPKIKTP.

The residue at position 2 (Gly-2) is an N-acetylglycine. The Cytoplasmic segment spans residues 2–92 (GTTLDVSRAE…LPLVLLGKSK (91 aa)). Residues 93–109 (NALLSTFLFLDQIVWLG) form a helical membrane-spanning segment. Topologically, residues 110 to 207 (RSGIYKNKER…LLQLAPTKIT (98 aa)) are lumenal. Residues 208 to 227 (PRVTGAFGFITSIISCYQLL) form a helical membrane-spanning segment. Residues 228–236 (PTRPKIKTP) lie on the Cytoplasmic side of the membrane.

This sequence belongs to the peroxin-11 family. As to quaternary structure, homooligomer. Interacts with ARC5 and FIS1B on peroxisomes. As to expression, expressed in developing siliques.

Its subcellular location is the peroxisome membrane. Involved in peroxisomal proliferation. Promotes peroxisomal duplication, aggregation or elongation without fission. In Arabidopsis thaliana (Mouse-ear cress), this protein is Peroxisomal membrane protein 11D (PEX11D).